A 233-amino-acid chain; its full sequence is Orotidine 5'-phosphate decarboxylase (233 aa).

Substrate-binding positions include Asp-11, Lys-34, 61–70 (DLKLHDIPNT), Thr-117, Arg-179, Gln-188, Gly-208, and Arg-209. The Proton donor role is filled by Lys-63.

This sequence belongs to the OMP decarboxylase family. Type 1 subfamily. As to quaternary structure, homodimer.

The enzyme catalyses orotidine 5'-phosphate + H(+) = UMP + CO2. It functions in the pathway pyrimidine metabolism; UMP biosynthesis via de novo pathway; UMP from orotate: step 2/2. Functionally, catalyzes the decarboxylation of orotidine 5'-monophosphate (OMP) to uridine 5'-monophosphate (UMP). The polypeptide is Orotidine 5'-phosphate decarboxylase (Streptococcus pneumoniae (strain JJA)).